Here is a 179-residue protein sequence, read N- to C-terminus: Large ribosomal subunit protein uL5 (179 aa).

Belongs to the universal ribosomal protein uL5 family. As to quaternary structure, part of the 50S ribosomal subunit; part of the 5S rRNA/L5/L18/L25 subcomplex. Contacts the 5S rRNA and the P site tRNA. Forms a bridge to the 30S subunit in the 70S ribosome.

Functionally, this is one of the proteins that bind and probably mediate the attachment of the 5S RNA into the large ribosomal subunit, where it forms part of the central protuberance. In the 70S ribosome it contacts protein S13 of the 30S subunit (bridge B1b), connecting the 2 subunits; this bridge is implicated in subunit movement. Contacts the P site tRNA; the 5S rRNA and some of its associated proteins might help stabilize positioning of ribosome-bound tRNAs. The chain is Large ribosomal subunit protein uL5 from Oceanobacillus iheyensis (strain DSM 14371 / CIP 107618 / JCM 11309 / KCTC 3954 / HTE831).